A 316-amino-acid chain; its full sequence is Protease HtpX homolog (316 aa).

The helical transmembrane segment at 16 to 36 (LFMGAGFLIGGATGMMIALVF) threads the bilayer. His-134 contacts Zn(2+). Residue Glu-135 is part of the active site. His-138 provides a ligand contact to Zn(2+). The next 2 helical transmembrane spans lie at 149–169 (VTAT…FFGG) and 180–200 (LGGM…AMLV). Glu-209 is a Zn(2+) binding site. Residues 295-316 (PVMAATTSSSVPLSGERGGPWS) are disordered.

The protein belongs to the peptidase M48B family. Zn(2+) is required as a cofactor.

The protein localises to the cell inner membrane. The polypeptide is Protease HtpX homolog (Caulobacter vibrioides (strain ATCC 19089 / CIP 103742 / CB 15) (Caulobacter crescentus)).